Reading from the N-terminus, the 87-residue chain is Cytochrome c6 (87 aa).

4 residues coordinate heme c: Cys10, Cys13, His14, and Met56.

The protein belongs to the cytochrome c family. PetJ subfamily. As to quaternary structure, monomer. Binds 1 heme c group covalently per subunit.

It localises to the plastid. The protein resides in the chloroplast thylakoid lumen. Functionally, functions as an electron carrier between membrane-bound cytochrome b6-f and photosystem I in oxygenic photosynthesis. The polypeptide is Cytochrome c6 (petJ) (Euglena viridis (Cercaria viridis)).